The primary structure comprises 1399 residues: DNA-directed RNA polymerase subunit beta' (1399 aa).

Zn(2+) contacts are provided by Cys70, Cys72, Cys85, and Cys88. Asp460, Asp462, and Asp464 together coordinate Mg(2+). 4 residues coordinate Zn(2+): Cys814, Cys888, Cys895, and Cys898.

This sequence belongs to the RNA polymerase beta' chain family. In terms of assembly, the RNAP catalytic core consists of 2 alpha, 1 beta, 1 beta' and 1 omega subunit. When a sigma factor is associated with the core the holoenzyme is formed, which can initiate transcription. It depends on Mg(2+) as a cofactor. Requires Zn(2+) as cofactor.

It catalyses the reaction RNA(n) + a ribonucleoside 5'-triphosphate = RNA(n+1) + diphosphate. Functionally, DNA-dependent RNA polymerase catalyzes the transcription of DNA into RNA using the four ribonucleoside triphosphates as substrates. This chain is DNA-directed RNA polymerase subunit beta', found in Pseudomonas syringae pv. syringae (strain B728a).